Reading from the N-terminus, the 32-residue chain is MMCMIIRRNRFTGVHDQNLIFNVKSTDVNCLV.

This is an uncharacterized protein from Ornithodoros (relapsing fever ticks).